A 328-amino-acid polypeptide reads, in one-letter code: Dolichyl-diphosphooligosaccharide--protein glycosyltransferase subunit MAGT1 (328 aa).

A signal peptide spans 1-22; sequence MAALPVLVLVLLLACGGPRAAG. Residues 23 to 177 lie on the Extracellular side of the membrane; it reads QKRKEMVLSE…DVNIRVIRPP (155 aa). The region spanning 40–168 is the Thioredoxin domain; the sequence is WTSKRSVIRM…LARWVADRTD (129 aa). N64 carries N-linked (GlcNAc...) asparagine glycosylation. C80 and C83 are joined by a disulfide. The chain crosses the membrane as a helical span at residues 178 to 198; sequence NYAGPLMLGLLLAVIGGLVYL. Residues 199–211 lie on the Cytoplasmic side of the membrane; sequence RGSNLDFLYNKTG. The helical transmembrane segment at 212–232 threads the bilayer; sequence WAFAALCFVLAMTSGQMWNHI. Topologically, residues 233-257 are extracellular; sequence RGPPYAHKNPHTGQVNYIHGSSQAQ. Residues 258-278 traverse the membrane as a helical segment; that stretch reads FVAETHIVLLFNGGVTLGMVL. The Cytoplasmic segment spans residues 279 to 293; the sequence is LHEAATSDMDVGKRK. Residues 294–314 traverse the membrane as a helical segment; sequence IMCIAGIGLVVFFFSWLLSVF. Topologically, residues 315–328 are extracellular; sequence RSKYHGYPYSFLMS.

Belongs to the OST3/OST6 family. As to quaternary structure, accessory component of the STT3B-containing form of the oligosaccharyltransferase (OST) complex. OST exists in two different complex forms which contain common core subunits RPN1, RPN2, OST48, OST4, DAD1 and TMEM258, either STT3A or STT3B as catalytic subunits, and form-specific accessory subunits. OST can form stable complexes with the Sec61 complex or with both the Sec61 and TRAP complexes.

The protein localises to the cell membrane. It is found in the endoplasmic reticulum. It localises to the endoplasmic reticulum membrane. The protein operates within protein modification; protein glycosylation. In terms of biological role, accessory component of the STT3B-containing form of the N-oligosaccharyl transferase (OST) complex which catalyzes the transfer of a high mannose oligosaccharide from a lipid-linked oligosaccharide donor to an asparagine residue within an Asn-X-Ser/Thr consensus motif in nascent polypeptide chains. Involved in N-glycosylation of STT3B-dependent substrates. Specifically required for the glycosylation of a subset of acceptor sites that are near cysteine residues; in this function seems to act redundantly with TUSC3. In its oxidized form proposed to form transient mixed disulfides with a glycoprotein substrate to facilitate access of STT3B to the unmodified acceptor site. Also has oxidoreductase-independent functions in the STT3B-containing OST complex possibly involving substrate recognition. Could indirectly play a role in Mg(2+) transport in epithelial cells. This chain is Dolichyl-diphosphooligosaccharide--protein glycosyltransferase subunit MAGT1, found in Gallus gallus (Chicken).